The sequence spans 301 residues: Troponin T, cardiac muscle (301 aa).

2 stretches are compositionally biased toward acidic residues: residues 1 to 42 (MSDL…EEEA) and 50 to 74 (AETE…DGPV). Disordered regions lie at residues 1-99 (MSDL…GERV) and 125-223 (ENRK…KKKK). S2 is subject to N-acetylserine. S2 bears the Phosphoserine; by CK2 mark. A compositionally biased stretch (pro residues) spans 82 to 93 (RPFMPNLVPPKI). Composition is skewed to basic and acidic residues over residues 125–186 (ENRK…DEAR) and 206–223 (QTER…KKKK). Residue T207 is modified to Phosphothreonine; by PKC/PRKCA. Position 211 is a phosphoserine; by PKC/PRKCA (S211). T216 bears the Phosphothreonine; by PKC/PRKCA and RAF1 mark. A Phosphothreonine; by PKC/PRKCA modification is found at T297.

This sequence belongs to the troponin T family. As to quaternary structure, binds with troponins I and C to make the thin-filament regulatory complex, troponin. Post-translationally, phosphorylation at Thr-216 by PRKCA induces significant reduction in myofilament calcium sensitivity and actomyosin ATPase activity. As to expression, the major isoform in adult heart is CTNT4.

Its function is as follows. Troponin T is the tropomyosin-binding subunit of troponin, the thin filament regulatory complex which confers calcium-sensitivity to striated muscle actomyosin ATPase activity. The polypeptide is Troponin T, cardiac muscle (TNNT2) (Oryctolagus cuniculus (Rabbit)).